The chain runs to 189 residues: Large ribosomal subunit protein eL19A (189 aa).

A Glycyl lysine isopeptide (Lys-Gly) (interchain with G-Cter in ubiquitin) cross-link involves residue Lys-21. A phosphoserine mark is found at Ser-30 and Ser-37. Residues Lys-53 and Lys-60 each participate in a glycyl lysine isopeptide (Lys-Gly) (interchain with G-Cter in ubiquitin) cross-link. The segment at 58–85 is disordered; it reads HSKSRTRAHAQSKREGRHSGYGKRKGTR. Basic residues predominate over residues 59-68; the sequence is SKSRTRAHAQ. Phosphoserine is present on Ser-91. Residues Lys-146 and Lys-186 each participate in a glycyl lysine isopeptide (Lys-Gly) (interchain with G-Cter in ubiquitin) cross-link. The interval 164–189 is disordered; it reads LKNRAARDRRAQRVAEKRDALLKEDA.

Belongs to the eukaryotic ribosomal protein eL19 family. As to quaternary structure, component of the large ribosomal subunit (LSU). Mature yeast ribosomes consist of a small (40S) and a large (60S) subunit. The 40S small subunit contains 1 molecule of ribosomal RNA (18S rRNA) and 33 different proteins (encoded by 57 genes). The large 60S subunit contains 3 rRNA molecules (25S, 5.8S and 5S rRNA) and 46 different proteins (encoded by 81 genes). eL19 lies in close proximity to the binding site for eukaryotic initiation factor eIF4G.

It localises to the cytoplasm. Component of the ribosome, a large ribonucleoprotein complex responsible for the synthesis of proteins in the cell. The small ribosomal subunit (SSU) binds messenger RNAs (mRNAs) and translates the encoded message by selecting cognate aminoacyl-transfer RNA (tRNA) molecules. The large subunit (LSU) contains the ribosomal catalytic site termed the peptidyl transferase center (PTC), which catalyzes the formation of peptide bonds, thereby polymerizing the amino acids delivered by tRNAs into a polypeptide chain. The nascent polypeptides leave the ribosome through a tunnel in the LSU and interact with protein factors that function in enzymatic processing, targeting, and the membrane insertion of nascent chains at the exit of the ribosomal tunnel. eL19 may play a role in the last stages of translation initiation, in particular subunit joining and shedding/releasing factors. This is Large ribosomal subunit protein eL19A from Saccharomyces cerevisiae (strain ATCC 204508 / S288c) (Baker's yeast).